The sequence spans 218 residues: Thiopurine S-methyltransferase (218 aa).

The S-adenosyl-L-methionine site is built by W10, L45, E66, and R123.

Belongs to the class I-like SAM-binding methyltransferase superfamily. TPMT family.

It is found in the cytoplasm. It carries out the reaction S-adenosyl-L-methionine + a thiopurine = S-adenosyl-L-homocysteine + a thiopurine S-methylether.. The sequence is that of Thiopurine S-methyltransferase from Pseudomonas aeruginosa (strain UCBPP-PA14).